The primary structure comprises 401 residues: Argininosuccinate synthase (401 aa).

ATP is bound by residues alanine 10–serine 18 and alanine 38. Tyrosine 89 is an L-citrulline binding site. Residue glycine 119 coordinates ATP. Residues threonine 121, asparagine 125, and aspartate 126 each coordinate L-aspartate. Asparagine 125 lines the L-citrulline pocket. The L-citrulline site is built by arginine 129, serine 177, serine 186, glutamate 262, and tyrosine 274.

This sequence belongs to the argininosuccinate synthase family. Type 1 subfamily. As to quaternary structure, homotetramer.

Its subcellular location is the cytoplasm. It carries out the reaction L-citrulline + L-aspartate + ATP = 2-(N(omega)-L-arginino)succinate + AMP + diphosphate + H(+). It participates in amino-acid biosynthesis; L-arginine biosynthesis; L-arginine from L-ornithine and carbamoyl phosphate: step 2/3. This Prochlorococcus marinus (strain MIT 9313) protein is Argininosuccinate synthase.